The primary structure comprises 358 residues: Replication-associated protein (358 aa).

Positions 8–116 (RIQAKNIFLT…DGDTIEWGEF (109 aa)) constitute a CRESS-DNA virus Rep endonuclease domain. The RCR-1 motif lies at 15-18 (FLTY). Residues E49, H57, and H59 each coordinate a divalent metal cation. The RCR-2 motif lies at 57 to 59 (HLH). Y103 serves as the catalytic For DNA cleavage activity. The RCR-3 signature appears at 103–106 (YVDK). D107 provides a ligand contact to a divalent metal cation. A binding to RBR1 region spans residues 143 to 153 (LEQALQILKEE). Positions 156-176 (KDYFLQHHNLLNNAQKIFQRA) are oligomerization. Residue 222–229 (GDSRTGKT) coordinates ATP.

The protein belongs to the geminiviridae Rep protein family. In terms of assembly, homooligomer. Interacts with the replication enhancer protein (REn). Interacts with host retinoblastoma-related protein 1 (RBR1), and may thereby induce the transcription of host replicative enzymes even if the cell is not dividing anymore. Interacts with host PCNA. Interacts with host SCE1 protein. Requires Mg(2+) as cofactor. It depends on Mn(2+) as a cofactor.

It is found in the host nucleus. Essential for the replication of viral ssDNA. The closed circular ssDNA genome is first converted to a superhelical dsDNA. Rep binds a specific region at the genome origin of replication. It introduces an endonucleolytic nick within the conserved sequence 5'-TAATATTAC-3' in the intergenic region of the genome present in all geminiviruses, thereby initiating the rolling circle replication (RCR). Following cleavage, binds covalently to the 5'-phosphate of DNA as a tyrosyl ester. The cleavage gives rise to a free 3'-OH that serves as a primer for the cellular DNA polymerase. The polymerase synthesizes the (+) strand DNA by rolling circle mechanism. After one round of replication, a Rep-catalyzed nucleotidyl transfer reaction releases a circular single-stranded virus genome, thereby terminating the replication. Displays origin-specific DNA cleavage, nucleotidyl transferase, ATPase and helicase activities. In Beet curly top virus (strain California/Logan) (BCTV), this protein is Replication-associated protein.